We begin with the raw amino-acid sequence, 177 residues long: MSEKKEIATFAGGCFWCMVKPFDEQPGIEKVVSGYTGGHTENPTYEEVCSETTGHREAVQITFQPDIYPYEKLVELFWQQIDPTDAGGQFADRGSSYRAAIYYHNDEQKQIAEASKKQLEESGIFKKPIVTDILKAEPFYEAEGYHQHFYKKNPDHYGRYRVGSGRQGFLDEHWRDR.

Cys14 is an active-site residue.

This sequence belongs to the MsrA Met sulfoxide reductase family.

The catalysed reaction is L-methionyl-[protein] + [thioredoxin]-disulfide + H2O = L-methionyl-(S)-S-oxide-[protein] + [thioredoxin]-dithiol. It carries out the reaction [thioredoxin]-disulfide + L-methionine + H2O = L-methionine (S)-S-oxide + [thioredoxin]-dithiol. In terms of biological role, has an important function as a repair enzyme for proteins that have been inactivated by oxidation. Catalyzes the reversible oxidation-reduction of methionine sulfoxide in proteins to methionine. This Bacillus velezensis (strain DSM 23117 / BGSC 10A6 / LMG 26770 / FZB42) (Bacillus amyloliquefaciens subsp. plantarum) protein is Peptide methionine sulfoxide reductase MsrA.